The chain runs to 537 residues: Beta-galactoside alpha-2,6-sialyltransferase 2 (537 aa).

Over Met-1–Arg-10 the chain is Cytoplasmic. A helical; Signal-anchor for type II membrane protein transmembrane segment spans residues Leu-11–Leu-31. The Lumenal portion of the chain corresponds to Asp-32–Ile-537. Disordered stretches follow at residues Thr-83–Ile-117 and Gly-134–Ser-202. Positions Gly-134–Val-145 are enriched in polar residues. Residues Glu-166–Val-185 show a composition bias toward acidic residues. 3 disulfides stabilise this stretch: Cys-265–Cys-535, Cys-312–Cys-464, and Cys-482–Cys-493. Residues Asn-353 and Asn-373 are each glycosylated (N-linked (GlcNAc...) asparagine).

The protein belongs to the glycosyltransferase 29 family.

Its subcellular location is the golgi apparatus. It is found in the golgi stack membrane. The enzyme catalyses a beta-D-galactoside + CMP-N-acetyl-beta-neuraminate = an N-acetyl-alpha-neuraminyl-(2-&gt;6)-beta-D-galactosyl derivative + CMP + H(+). In terms of biological role, transfers sialic acid from the donor of substrate CMP-sialic acid to galactose containing acceptor substrates. This chain is Beta-galactoside alpha-2,6-sialyltransferase 2 (st6gal2), found in Takifugu rubripes (Japanese pufferfish).